The following is a 79-amino-acid chain: Small ribosomal subunit protein bS18B (79 aa).

Belongs to the bacterial ribosomal protein bS18 family. Part of the 30S ribosomal subunit. Forms a tight heterodimer with protein bS6.

Functionally, binds as a heterodimer with protein bS6 to the central domain of the 16S rRNA, where it helps stabilize the platform of the 30S subunit. This Mycolicibacterium gilvum (strain PYR-GCK) (Mycobacterium gilvum (strain PYR-GCK)) protein is Small ribosomal subunit protein bS18B.